The primary structure comprises 451 residues: MNLEVKKIDTANARLSAKPSIEDLEKRYDKIAQKIAQKVKIDGFRRGKVPLSLVKTRYQAQIEQDAQEEMIQEVLKNALKELGVETKDLIGSPNFTKFEKKDTHFEIEADIGLKPTIVLDKIQECVPSVGVEVPNEEKVNERLKQLAKDYAKFVDTDSQRKAQNDDKLTIDFEGFIDNAPFEGGKAENFSLILGSKQMLEDFEKALLGMQASEEKEFPLTFPSGYHAEHLAGKEALFKVKLRQIQVREALEINDELAKIVLANEENATLELLKERVKGQLFLENKARLYNEELKEKLIENLDEKILFDLPKTIIEQEMDLLFRNALYSMQAEEVKSLQDSQEKAKEKRESFRNDATKSVKITFVIDALAKEEKIGVHDNEVFQTLYYEAMMTGQNPENLIEQYRKNNMLAAVKMAMIEDRVLAYLLDKNLPKEQQEILEKMRPNAQKTQVG.

Residues 165 to 250 enclose the PPIase FKBP-type domain; sequence DDKLTIDFEG…LRQIQVREAL (86 aa).

The protein belongs to the FKBP-type PPIase family. Tig subfamily.

The protein resides in the cytoplasm. It catalyses the reaction [protein]-peptidylproline (omega=180) = [protein]-peptidylproline (omega=0). Functionally, involved in protein export. Acts as a chaperone by maintaining the newly synthesized protein in an open conformation. Functions as a peptidyl-prolyl cis-trans isomerase. The chain is Trigger factor (tig) from Helicobacter pylori (strain J99 / ATCC 700824) (Campylobacter pylori J99).